The primary structure comprises 243 residues: Terpene cyclase dpmaB (243 aa).

The next 6 membrane-spanning stretches (helical) occupy residues proline 11 to tryptophan 31, alanine 51 to phenylalanine 71, leucine 112 to leucine 132, alanine 141 to serine 161, serine 169 to leucine 189, and isoleucine 207 to valine 227.

It belongs to the paxB family.

It is found in the membrane. Its pathway is secondary metabolite biosynthesis; terpenoid biosynthesis. Terpene cyclase; part of the gene cluster that mediates the biosynthesis of the diterpenoid pyrones subglutinols A and B. The first step of the pathway is the synthesis of the alpha-pyrone moiety by the polyketide synthase dpmaA via condensation of one acetyl-CoA starter unit with 3 malonyl-CoA units and 2 methylations. The alpha-pyrone is then combined with geranylgeranyl pyrophosphate (GGPP) formed by the GGPP synthase dpmaD through the action of the prenyltransferase dpmaC to yield a linear alpha-pyrone diterpenoid. Subsequent steps in the diterpenoid pyrone biosynthetic pathway involve the decalin core formation, which is initiated by the epoxidation of the C10-C11 olefin by the FAD-dependent oxidoreductase dpmaE, and is followed by a cyclization cascade catalyzed by the terpene cyclase dpmaB. The dehydrogenase dpmaF is then involved in tetrahydrofuran (THF) ring formation at the C5 unit to complete the formation of subglutinols A and B. This chain is Terpene cyclase dpmaB, found in Metarhizium anisopliae (Entomophthora anisopliae).